The following is a 182-amino-acid chain: CASP-like protein 2B1 (182 aa).

Topologically, residues 1-12 are cytoplasmic; it reads MKLIDRRMRLTE. Residues 13 to 31 form a helical membrane-spanning segment; it reads LLLRCSISVFALLALILVV. Topologically, residues 32-52 are extracellular; the sequence is TDTEVKLIFTIKKTAKYTDMK. The helical transmembrane segment at 53–73 threads the bilayer; it reads AVVFLVVANGIAAVYSLLQSV. Topologically, residues 74 to 89 are cytoplasmic; it reads RCVVGTMKGRVLFSKP. Residues 90 to 110 form a helical membrane-spanning segment; sequence LAWAFFSGDQAMAYLNVAAIA. At 111–141 the chain is on the extracellular side; sequence ATAESGVIAREGEEDLQWMRVCNMYGKFCNQ. Residues 142 to 162 form a helical membrane-spanning segment; that stretch reads MAIGVSSALLASIAMVFVSCI. Over 163–182 the chain is Cytoplasmic; the sequence is SAFSLFRLYGATRDRRTTPW.

It belongs to the Casparian strip membrane proteins (CASP) family. Homodimer and heterodimers.

It is found in the cell membrane. The protein is CASP-like protein 2B1 of Arabidopsis lyrata subsp. lyrata (Lyre-leaved rock-cress).